A 456-amino-acid chain; its full sequence is Chromosomal replication initiator protein DnaA (456 aa).

Residues 1–83 are domain I, interacts with DnaA modulators; that stretch reads MTASLWQQCL…LRFDIGNRPH (83 aa). Residues 83-119 form a domain II region; that stretch reads HPVAVARAPARGADPVNNSQKSWESKAEAKPEPNHKS. The tract at residues 92 to 122 is disordered; that stretch reads ARGADPVNNSQKSWESKAEAKPEPNHKSNTN. A compositionally biased stretch (basic and acidic residues) spans 105-117; that stretch reads WESKAEAKPEPNH. The domain III, AAA+ region stretch occupies residues 120-336; the sequence is NTNVNYTFEN…GALNRVIANA (217 aa). ATP is bound by residues Gly164, Gly166, Lys167, and Thr168. Residues 337–456 form a domain IV, binds dsDNA region; sequence NFTGRAINID…YSNLIRTLSS (120 aa).

It belongs to the DnaA family. Oligomerizes as a right-handed, spiral filament on DNA at oriC.

The protein resides in the cytoplasm. Its function is as follows. Plays an essential role in the initiation and regulation of chromosomal replication. ATP-DnaA binds to the origin of replication (oriC) to initiate formation of the DNA replication initiation complex once per cell cycle. Binds the DnaA box (a 9 base pair repeat at the origin) and separates the double-stranded (ds)DNA. Forms a right-handed helical filament on oriC DNA; dsDNA binds to the exterior of the filament while single-stranded (ss)DNA is stabiized in the filament's interior. The ATP-DnaA-oriC complex binds and stabilizes one strand of the AT-rich DNA unwinding element (DUE), permitting loading of DNA polymerase. After initiation quickly degrades to an ADP-DnaA complex that is not apt for DNA replication. Binds acidic phospholipids. In Aeromonas hydrophila subsp. hydrophila (strain ATCC 7966 / DSM 30187 / BCRC 13018 / CCUG 14551 / JCM 1027 / KCTC 2358 / NCIMB 9240 / NCTC 8049), this protein is Chromosomal replication initiator protein DnaA.